Consider the following 272-residue polypeptide: Type III pantothenate kinase (272 aa).

An ATP-binding site is contributed by 6–13 (DVRNTHTV). 109 to 112 (GADR) contributes to the substrate binding site. The active-site Proton acceptor is Asp-111. Asp-131 lines the K(+) pocket. Ser-134 lines the ATP pocket. Substrate is bound at residue Thr-186.

It belongs to the type III pantothenate kinase family. Homodimer. It depends on NH4(+) as a cofactor. K(+) is required as a cofactor.

Its subcellular location is the cytoplasm. The catalysed reaction is (R)-pantothenate + ATP = (R)-4'-phosphopantothenate + ADP + H(+). It functions in the pathway cofactor biosynthesis; coenzyme A biosynthesis; CoA from (R)-pantothenate: step 1/5. Catalyzes the phosphorylation of pantothenate (Pan), the first step in CoA biosynthesis. This Mycobacterium ulcerans (strain Agy99) protein is Type III pantothenate kinase.